A 413-amino-acid polypeptide reads, in one-letter code: Probable alpha-tubulin polyglutamylase Ttll1 (413 aa).

One can recognise a TTL domain in the interval 2–370; the sequence is ASKKLKYKTD…DDWNDDSSKT (369 aa). Residues 184 to 187, Lys-197, and Asp-199 each bind ATP; that span reads SRYI.

Belongs to the tubulin polyglutamylase family.

The protein resides in the cytoplasm. It localises to the cytoskeleton. The protein localises to the cilium basal body. Its subcellular location is the contractile vacuole. Its function is as follows. Probable tubulin polyglutamylase with a strong preference for alpha-tubulin. Modifies alpha-tubulin, generating side chains of glutamate on the gamma-carboxyl groups of specific glutamate residues within the C-terminal tail of alpha-tubulin. The polypeptide is Probable alpha-tubulin polyglutamylase Ttll1 (Ttll1) (Tetrahymena thermophila (strain SB210)).